The following is an 820-amino-acid chain: Serine/threonine-protein phosphatase 4 regulatory subunit 3B (820 aa).

In terms of domain architecture, WH1 spans 1–100 (MSDTRRRVKV…DEIWEKICQV (100 aa)). S117 and S663 each carry phosphoserine. Positions 687–820 (EDDDEEGKAV…SPRKRPRLGS (134 aa)) are disordered. Residues 701 to 732 (EKSKTEDDFPDSYEKFMETKKAKESEDKENLP) show a composition bias toward basic and acidic residues. Residues 744 to 789 (FSHSPSATNGTNSTNSKSVVSQTTPASSNVASSKTTSLATSVTATK) are compositionally biased toward polar residues. A compositionally biased stretch (acidic residues) spans 798-809 (YPDDEEEDEEEE). The residue at position 811 (S811) is a Phosphoserine.

It belongs to the SMEK family. In terms of assembly, serine/threonine-protein phosphatase 4 (PP4) occurs in different assemblies of the catalytic and one or more regulatory subunits. Component of the PP4 complex PPP4C-PPP4R2-PPP4R3B.

It is found in the cytoplasm. It localises to the cytoskeleton. Its subcellular location is the microtubule organizing center. The protein resides in the centrosome. The protein localises to the nucleus. Functionally, regulatory subunit of serine/threonine-protein phosphatase 4 (PP4). May regulate the activity of PPP4C at centrosomal microtubule organizing centers. In Mus musculus (Mouse), this protein is Serine/threonine-protein phosphatase 4 regulatory subunit 3B.